A 203-amino-acid chain; its full sequence is Lipoprotein MlpJ (203 aa).

A signal peptide spans 1–17 (MKIINILFCISLLLLNS). The N-palmitoyl cysteine moiety is linked to residue Cys-18. The S-diacylglycerol cysteine moiety is linked to residue Cys-18. The disordered stretch occupies residues 26–47 (LKNNAQQTKSRKKRDLSQEELP).

The protein belongs to the Multicopy lipoprotein (Mlp) family.

It localises to the cell outer membrane. Its function is as follows. An outer membrane protein that may participate in pathogenesis. Some human Lyme disease patients have antibodies against this protein. The Mlp proteins probably undergo intragenic recombination, generating new alleles. This chain is Lipoprotein MlpJ, found in Borreliella burgdorferi (strain ATCC 35210 / DSM 4680 / CIP 102532 / B31) (Borrelia burgdorferi).